The primary structure comprises 130 residues: Small ribosomal subunit protein uS8 (130 aa).

This sequence belongs to the universal ribosomal protein uS8 family. Part of the 30S ribosomal subunit. Contacts proteins S5 and S12.

In terms of biological role, one of the primary rRNA binding proteins, it binds directly to 16S rRNA central domain where it helps coordinate assembly of the platform of the 30S subunit. This chain is Small ribosomal subunit protein uS8, found in Idiomarina loihiensis (strain ATCC BAA-735 / DSM 15497 / L2-TR).